A 342-amino-acid polypeptide reads, in one-letter code: Protein BASIC PENTACYSTEINE6 (342 aa).

Residues 41 to 67 (AIQERNLAISEKKAAVAERDMAFLQRD) are a coiled coil. The alanine-zipper stretch occupies residues 41-76 (AIQERNLAISEKKAAVAERDMAFLQRDTAIAERNNA). The disordered stretch occupies residues 143–199 (REMEPNDGLPTSPPAGSTLESAKPKRGKRVNPKATTQTAANKRGPKNQRKVKKESED). Positions 164–195 (AKPKRGKRVNPKATTQTAANKRGPKNQRKVKK) are required for nucleus and nucleolus localization. Positions 185-194 (RGPKNQRKVK) are enriched in basic residues. Residues 192–195 (KVKK) carry the Nuclear localization signal motif.

It belongs to the BBR/BPC family. Homodimer. Heterodimer with BPC4. As to expression, expressed in seedlings, leaves and pistils. Detected in the base of flowers and tips of carpels, in sepal vasculature, in young rosette, in the lateral and tip of primary roots, and in ovule at the exception of the outer integument.

The protein resides in the nucleus. It localises to the nucleolus. Its function is as follows. Transcriptional regulator that specifically binds to GA-rich elements (GAGA-repeats) present in regulatory sequences of genes involved in developmental processes. This Arabidopsis thaliana (Mouse-ear cress) protein is Protein BASIC PENTACYSTEINE6 (BPC6).